The following is a 304-amino-acid chain: MSHLLTMSELSEQEISEILKDAEDFANGKERKTTEQTFVANLFFENSTRTRFSFEVAEKRLGLEVLDFSADASSVQKGETLYDTIRTLESIGTKAVVIRHEQDRYFDELKDQVNIPILNAGDGCGNHPTQCLLDLLTIKQEFGRFEGLKIAIVGDVRHSRVARSNAEALTKLGATIYFASPEEWKDEENTFGTYKSLDELVPEVDVMMLLRVQHERHDHYETDIMKEYHEQHGLTVEREKRMKEGSIIMHPAPVNRDVEIASELVECERSRIFKQMENGVYVRMAVLKRALPNVLGGMKHELFV.

Residues Arg-49 and Thr-50 each contribute to the carbamoyl phosphate site. Lys-77 contributes to the L-aspartate binding site. Carbamoyl phosphate is bound by residues Arg-99, His-127, and Gln-130. L-aspartate is bound by residues Arg-160 and Arg-211. The carbamoyl phosphate site is built by Ala-252 and Pro-253.

The protein belongs to the aspartate/ornithine carbamoyltransferase superfamily. ATCase family. Heterododecamer (2C3:3R2) of six catalytic PyrB chains organized as two trimers (C3), and six regulatory PyrI chains organized as three dimers (R2).

It carries out the reaction carbamoyl phosphate + L-aspartate = N-carbamoyl-L-aspartate + phosphate + H(+). The protein operates within pyrimidine metabolism; UMP biosynthesis via de novo pathway; (S)-dihydroorotate from bicarbonate: step 2/3. In terms of biological role, catalyzes the condensation of carbamoyl phosphate and aspartate to form carbamoyl aspartate and inorganic phosphate, the committed step in the de novo pyrimidine nucleotide biosynthesis pathway. The chain is Aspartate carbamoyltransferase catalytic subunit from Bacillus mycoides (strain KBAB4) (Bacillus weihenstephanensis).